Here is a 189-residue protein sequence, read N- to C-terminus: Homeobox protein HD-2 (189 aa).

The segment at residues 119 to 181 (KPRTRANFPM…NARRRILPFM (63 aa)) is a DNA-binding region (homeobox; TALE-type).

Belongs to the TALE/KNOX homeobox family.

It localises to the nucleus. The chain is Homeobox protein HD-2 (HD-2) from Encephalitozoon cuniculi (strain GB-M1) (Microsporidian parasite).